A 254-amino-acid chain; its full sequence is Putative electron transfer flavoprotein subunit YdiQ (254 aa).

It belongs to the ETF beta-subunit/FixA family. As to quaternary structure, ydiR and YdiQ form a heterodimer.

Its function is as follows. May play a role in a redox process. The chain is Putative electron transfer flavoprotein subunit YdiQ (ydiQ) from Escherichia coli (strain K12).